Consider the following 599-residue polypeptide: Membrane protein insertase YidC (599 aa).

Residues 6 to 26 form a helical membrane-spanning segment; that stretch reads NYFIAIALSVVIVLAWQFLYM. A disordered region spans residues 35 to 78; sequence RAEEARQAQQQTTQQQPAPGAAPGATVEGAPPASSTQAAATATR. The span at 41 to 76 shows a compositional bias: low complexity; sequence QAQQQTTQQQPAPGAAPGATVEGAPPASSTQAAATA. The next 4 membrane-spanning stretches (helical) occupy residues 378-398, 448-468, 501-521, and 536-556; these read FGVA…PLAS, WPML…YVTI, VPHF…MFLQ, and IFTW…AGLV.

Belongs to the OXA1/ALB3/YidC family. Type 1 subfamily. As to quaternary structure, interacts with the Sec translocase complex via SecD. Specifically interacts with transmembrane segments of nascent integral membrane proteins during membrane integration.

The protein localises to the cell inner membrane. In terms of biological role, required for the insertion and/or proper folding and/or complex formation of integral membrane proteins into the membrane. Involved in integration of membrane proteins that insert both dependently and independently of the Sec translocase complex, as well as at least some lipoproteins. Aids folding of multispanning membrane proteins. This chain is Membrane protein insertase YidC, found in Agrobacterium fabrum (strain C58 / ATCC 33970) (Agrobacterium tumefaciens (strain C58)).